Here is a 612-residue protein sequence, read N- to C-terminus: UPF0329 protein ECU05_1680/ECU11_0050 (612 aa).

Basic and acidic residues predominate over residues 304–330 (RQRREMEKKEEEKKKEEEKKKEEEKRK). The interval 304-424 (RQRREMEKKE…RKRYKIHRRV (121 aa)) is disordered. Residues 331–349 (EEKKKKKEEKKEEKKKKKE) are compositionally biased toward basic residues. A compositionally biased stretch (basic and acidic residues) spans 350–388 (EKKEEKKEEKKEEKKEEKKEEKKEEKKEEKSGKSLREGE).

This sequence belongs to the UPF0329 family.

This is UPF0329 protein ECU05_1680/ECU11_0050 from Encephalitozoon cuniculi (strain GB-M1) (Microsporidian parasite).